A 162-amino-acid polypeptide reads, in one-letter code: Peptide methionine sulfoxide reductase MsrA (162 aa).

Residue Cys10 is part of the active site.

This sequence belongs to the MsrA Met sulfoxide reductase family.

It carries out the reaction L-methionyl-[protein] + [thioredoxin]-disulfide + H2O = L-methionyl-(S)-S-oxide-[protein] + [thioredoxin]-dithiol. It catalyses the reaction [thioredoxin]-disulfide + L-methionine + H2O = L-methionine (S)-S-oxide + [thioredoxin]-dithiol. Its function is as follows. Has an important function as a repair enzyme for proteins that have been inactivated by oxidation. Catalyzes the reversible oxidation-reduction of methionine sulfoxide in proteins to methionine. This chain is Peptide methionine sulfoxide reductase MsrA, found in Clostridium acetobutylicum (strain ATCC 824 / DSM 792 / JCM 1419 / IAM 19013 / LMG 5710 / NBRC 13948 / NRRL B-527 / VKM B-1787 / 2291 / W).